Reading from the N-terminus, the 243-residue chain is UPF0758 protein AM1_4368 (243 aa).

One can recognise an MPN domain in the interval 113–235 (VIDDPAVAAA…FTSLRQTTSL (123 aa)). 3 residues coordinate Zn(2+): histidine 184, histidine 186, and aspartate 197. The JAMM motif motif lies at 184-197 (HNHPSGQTDPSPED).

The protein belongs to the UPF0758 family.

This chain is UPF0758 protein AM1_4368, found in Acaryochloris marina (strain MBIC 11017).